Here is a 427-residue protein sequence, read N- to C-terminus: Dihydrofolate synthetase (427 aa).

An ATP-binding site is contributed by 34 to 37 (GKGS). Glutamate 123 and histidine 153 together coordinate Mg(2+). Residues arginine 275 and aspartate 296 each contribute to the ATP site.

Belongs to the folylpolyglutamate synthase family.

The protein resides in the cytoplasm. It carries out the reaction 7,8-dihydropteroate + L-glutamate + ATP = 7,8-dihydrofolate + ADP + phosphate + H(+). It functions in the pathway cofactor biosynthesis; tetrahydrofolylpolyglutamate biosynthesis. Its function is as follows. Glutamate-adding enzyme which catalyzes the binding of the first glutamyl side chain to dihydropteroate. Leads to the de nove synthesis of tetrahydrofolate. The sequence is that of Dihydrofolate synthetase (FOL3) from Saccharomyces cerevisiae (strain ATCC 204508 / S288c) (Baker's yeast).